The chain runs to 631 residues: MAEETQHNKLAAAKKKLKEYWQKNRPRVPAGVNRNRKTNGSIPETATSGGCQPPGDSATGFHREGPTSSATLKDLESPCQERAVVLDSTSVKISRLKNTIKSLKQQKKQVEHQLEEEKKANNERQKAERVLEVQIQTLIIQKEELNTDLYHMERSLRYFEEESKDLAVRLQHSLQCKGELERALSAVIATEKKKANQLSSCSKAHTEWELEQSLQDQALLKAQLTQLKESFQQLQLERDECAEHIEGERARWHQRMSKMSQEICTLKKEKQDMRWVEQLEWSLSKLKNQTAEPLPPEPPAVPSEVELQHLRKELERVAGELQSQVKNNQHISLLNRRQEERIREQEERLRKQEERLQEQHEKLRQLAKPQSVFEELNNENKSTLQLEQQVKELQEKLGEEHLEVASQQNQQLTAQLSLMALPGEGHGGEHLDSEGEEAPQPMPSVPEDPESREAMSSFMDHLKEKADLSELLKKQELRFIQYWQERCHQKIHHLLSEPGGRAKDAALGGGHHQAGAQGGDEGEAAGAAADGIAAYSNYNNGHRKFLAAAHNSADEPGPGAPAPQELGAADKHGDLREVTLTSSAQGEAREDPLLDKPTAQPIVQDHQEHPGLGSNCCVPLFCWAWLPRRRR.

A disordered region spans residues 1-72 (MAEETQHNKL…REGPTSSATL (72 aa)). Polar residues predominate over residues 38 to 50 (TNGSIPETATSGG). 3 coiled-coil regions span residues 85–149 (VLDS…NTDL), 209–247 (ELEQ…HIEG), and 303–419 (SEVE…LSLM). 3 disordered regions span residues 422–451 (PGEG…DPES), 502–523 (AKDA…DEGE), and 551–610 (NSAD…QEHP). The segment covering 507–519 (LGGGHHQAGAQGG) has biased composition (gly residues). The span at 568–577 (AADKHGDLRE) shows a compositional bias: basic and acidic residues.

It belongs to the GOLGA8 family.

The chain is Golgin subfamily A member 8R from Homo sapiens (Human).